We begin with the raw amino-acid sequence, 167 residues long: Protein archease (167 aa).

Ala-2 carries the post-translational modification N-acetylalanine. Ca(2+) contacts are provided by Asp-39, Asp-166, and Ile-167.

The protein belongs to the archease family. As to quaternary structure, component of the tRNA-splicing ligase complex.

In terms of biological role, component of the tRNA-splicing ligase complex required to facilitate the enzymatic turnover of catalytic subunit RTCB. Together with DDX1, acts by facilitating the guanylylation of RTCB, a key intermediate step in tRNA ligation. This chain is Protein archease (ZBTB8OS), found in Homo sapiens (Human).